The following is a 105-amino-acid chain: Iron-sulfur cluster assembly protein CyaY (105 aa).

This sequence belongs to the frataxin family.

In terms of biological role, involved in iron-sulfur (Fe-S) cluster assembly. May act as a regulator of Fe-S biogenesis. This chain is Iron-sulfur cluster assembly protein CyaY, found in Paraburkholderia xenovorans (strain LB400).